The following is a 406-amino-acid chain: Arginine biosynthesis bifunctional protein ArgJ (406 aa).

Residues Thr152, Lys179, Thr190, Glu277, Asn401, and Ser406 each contribute to the substrate site. Thr190 functions as the Nucleophile in the catalytic mechanism.

Belongs to the ArgJ family. As to quaternary structure, heterotetramer of two alpha and two beta chains.

It is found in the cytoplasm. It carries out the reaction N(2)-acetyl-L-ornithine + L-glutamate = N-acetyl-L-glutamate + L-ornithine. It catalyses the reaction L-glutamate + acetyl-CoA = N-acetyl-L-glutamate + CoA + H(+). The protein operates within amino-acid biosynthesis; L-arginine biosynthesis; L-ornithine and N-acetyl-L-glutamate from L-glutamate and N(2)-acetyl-L-ornithine (cyclic): step 1/1. Its pathway is amino-acid biosynthesis; L-arginine biosynthesis; N(2)-acetyl-L-ornithine from L-glutamate: step 1/4. Catalyzes two activities which are involved in the cyclic version of arginine biosynthesis: the synthesis of N-acetylglutamate from glutamate and acetyl-CoA as the acetyl donor, and of ornithine by transacetylation between N(2)-acetylornithine and glutamate. The sequence is that of Arginine biosynthesis bifunctional protein ArgJ from Neisseria meningitidis serogroup A / serotype 4A (strain DSM 15465 / Z2491).